Here is a 239-residue protein sequence, read N- to C-terminus: Glucosamine-6-phosphate deaminase (239 aa).

Residue D62 is the Proton acceptor; for enolization step of the active site. The active-site For ring-opening step is N128. Catalysis depends on H130, which acts as the Proton acceptor; for ring-opening step. The active-site For ring-opening step is E135.

It belongs to the glucosamine/galactosamine-6-phosphate isomerase family. NagB subfamily.

The catalysed reaction is alpha-D-glucosamine 6-phosphate + H2O = beta-D-fructose 6-phosphate + NH4(+). Its pathway is amino-sugar metabolism; N-acetylneuraminate degradation; D-fructose 6-phosphate from N-acetylneuraminate: step 5/5. In terms of biological role, catalyzes the reversible isomerization-deamination of glucosamine 6-phosphate (GlcN6P) to form fructose 6-phosphate (Fru6P) and ammonium ion. In Lactobacillus acidophilus (strain ATCC 700396 / NCK56 / N2 / NCFM), this protein is Glucosamine-6-phosphate deaminase.